We begin with the raw amino-acid sequence, 427 residues long: UPF0229 protein bll6755 (427 aa).

The disordered stretch occupies residues 86-107 (DYLQRSGQGSAKDSGPGEGDSE).

Belongs to the UPF0229 family.

In Bradyrhizobium diazoefficiens (strain JCM 10833 / BCRC 13528 / IAM 13628 / NBRC 14792 / USDA 110), this protein is UPF0229 protein bll6755.